Here is a 987-residue protein sequence, read N- to C-terminus: Kinesin-like protein KIN-14G (987 aa).

Residues 44–163 enclose the Calponin-homology (CH) domain; it reads SLRRYEAAGW…CILALKSYSE (120 aa). The interval 201–221 is disordered; the sequence is ISRTQSTDMLSTDQPLSSDGD. Residues 394–721 form the Kinesin motor domain; the sequence is NIRVYCRVRP…LKFAERVGSV (328 aa). ATP is bound at residue 478-485; the sequence is GQTGSGKT. A coiled-coil region spans residues 725–754; the sequence is AARVNKDNSEVKELKEQIANLKMALVRKGN. 2 disordered regions span residues 759–849 and 927–987; these read QPTA…ESKS and NIQN…SLGT. Residues 788 to 797 show a composition bias toward polar residues; that stretch reads MGNTSNNSRP. Basic and acidic residues predominate over residues 840–849; sequence GKDEDRESKS. Over residues 964–974 the composition is skewed to polar residues; it reads PPNTVNSQPQR.

This sequence belongs to the TRAFAC class myosin-kinesin ATPase superfamily. Kinesin family. KIN-14 subfamily. As to quaternary structure, monomer. In terms of tissue distribution, flower specific.

Its subcellular location is the cytoplasm. It is found in the cytoskeleton. Microtubule-binding motor protein. The polypeptide is Kinesin-like protein KIN-14G (Arabidopsis thaliana (Mouse-ear cress)).